Here is a 695-residue protein sequence, read N- to C-terminus: RING finger protein 145 (695 aa).

The next 13 membrane-spanning stretches (helical) occupy residues 53 to 73, 77 to 97, 123 to 143, 146 to 166, 168 to 188, 225 to 245, 275 to 295, 316 to 336, 340 to 360, 384 to 404, 410 to 430, 460 to 480, and 482 to 502; these read YLAL…LTLP, LAKL…HQIS, FITA…VMKT, IWLF…IPIE, IVVI…YFLA, LVVP…QIYT, YSLL…LTLC, TEGV…LQVV, FLLS…MLEI, SLCL…CQFF, LLII…TLFV, LLEF…TVFG, and WTVM…WLRA. An RING-type; atypical zinc finger spans residues 537-575; sequence CSICYQDMNSAVITPCSHFFHPGCLKKWLYVQETCPLCH. The segment covering 589 to 604 has biased composition (polar residues); it reads SGSSTNPVVEQSANNP. Residues 589–608 form a disordered region; the sequence is SGSSTNPVVEQSANNPPQEP.

It localises to the membrane. This is RING finger protein 145 (rnf145) from Xenopus laevis (African clawed frog).